The chain runs to 73 residues: MQKLIILLLVAAVLMSTQALFQEKRRKEKIDLLSKRKTDAEKQHKRLCPDYTDPCSNAYECCSWNCHNGHCTG.

The signal sequence occupies residues 1-19 (MQKLIILLLVAAVLMSTQA). Positions 20-44 (LFQEKRRKEKIDLLSKRKTDAEKQH) are excised as a propeptide. 3 disulfides stabilise this stretch: C48-C62, C55-C66, and C61-C71.

It belongs to the conotoxin O2 superfamily. Expressed by the venom duct.

It is found in the secreted. Its function is as follows. Inhibits voltage-gated ion channels. In Conus victoriae (Queen Victoria cone), this protein is Conotoxin Vc6.17.